The chain runs to 279 residues: Acetyl-coenzyme A carboxylase carboxyl transferase subunit beta (279 aa).

The CoA carboxyltransferase N-terminal domain occupies 23-279 (LWWKCESCGA…LSQILGHLSS (257 aa)). Zn(2+) is bound by residues cysteine 27, cysteine 30, cysteine 46, and cysteine 49. The C4-type zinc-finger motif lies at 27-49 (CESCGAMLHKKQVEDHFYTCCEC).

Belongs to the AccD/PCCB family. In terms of assembly, acetyl-CoA carboxylase is a heterohexamer composed of biotin carboxyl carrier protein (AccB), biotin carboxylase (AccC) and two subunits each of ACCase subunit alpha (AccA) and ACCase subunit beta (AccD). Zn(2+) serves as cofactor.

The protein resides in the cytoplasm. The catalysed reaction is N(6)-carboxybiotinyl-L-lysyl-[protein] + acetyl-CoA = N(6)-biotinyl-L-lysyl-[protein] + malonyl-CoA. Its pathway is lipid metabolism; malonyl-CoA biosynthesis; malonyl-CoA from acetyl-CoA: step 1/1. Its function is as follows. Component of the acetyl coenzyme A carboxylase (ACC) complex. Biotin carboxylase (BC) catalyzes the carboxylation of biotin on its carrier protein (BCCP) and then the CO(2) group is transferred by the transcarboxylase to acetyl-CoA to form malonyl-CoA. The sequence is that of Acetyl-coenzyme A carboxylase carboxyl transferase subunit beta from Prosthecochloris aestuarii (strain DSM 271 / SK 413).